We begin with the raw amino-acid sequence, 31 residues long: Cytochrome b6-f complex subunit 6 (31 aa).

A helical membrane pass occupies residues 4 to 24; sequence VISYFGFLLVALAFTLVTYLG.

Belongs to the PetL family. In terms of assembly, the 4 large subunits of the cytochrome b6-f complex are cytochrome b6, subunit IV (17 kDa polypeptide, PetD), cytochrome f and the Rieske protein, while the 4 small subunits are PetG, PetL, PetM and PetN. The complex functions as a dimer.

It is found in the plastid. Its subcellular location is the chloroplast thylakoid membrane. Component of the cytochrome b6-f complex, which mediates electron transfer between photosystem II (PSII) and photosystem I (PSI), cyclic electron flow around PSI, and state transitions. PetL is important for photoautotrophic growth as well as for electron transfer efficiency and stability of the cytochrome b6-f complex. This Nephroselmis olivacea (Green alga) protein is Cytochrome b6-f complex subunit 6.